The sequence spans 332 residues: MSTQEKLISHVMKEEPVGCRNKVTVVGVGMVGMASAISVLLKDLCDELALVDVMEDKLKGEAMDLQHGALFLKTHKIVADKDYSVTANSKVVVVTAGARQQEGESRLNLVQRNVNIFKFIIPNIVKYSPNCILLVVSNPVDILTYVAWKLSGFPRHRVIGSGTNLDSARFRHLMGEKFHLHPSSCHGWIVGEHGDSSVAVWSGVNIAGVSLQTLNPNMGADGDSENWKELHKKVVDGAYEVIKLKGYTSWAIGMSVADLVESIVKNLHKVHPVSTLVQGMHGVKDEVFLSIPCVLGNSGLTDVIHMTLKPEEEKQLVKSAETLWGVQKELTL.

NAD(+)-binding positions include 29–57 (GMVG…MEDK) and Arg99. Residues Arg106, Asn138, and Arg169 each coordinate substrate. Asn138 serves as a coordination point for NAD(+). The active-site Proton acceptor is the His193. A substrate-binding site is contributed by Thr248.

The protein belongs to the LDH/MDH superfamily. LDH family. In terms of assembly, homotetramer.

The protein localises to the cytoplasm. It catalyses the reaction (S)-lactate + NAD(+) = pyruvate + NADH + H(+). Its pathway is fermentation; pyruvate fermentation to lactate; (S)-lactate from pyruvate: step 1/1. Its function is as follows. Interconverts simultaneously and stereospecifically pyruvate and lactate with concomitant interconversion of NADH and NAD(+). This chain is L-lactate dehydrogenase A chain (ldha), found in Fundulus heteroclitus (Killifish).